The following is a 540-amino-acid chain: Phosphoenolpyruvate carboxykinase (ATP) (540 aa).

Substrate contacts are provided by R67, Y207, and K213. Residues K213, H232, and 248 to 256 each bind ATP; that span reads GLSGTGKTT. Mn(2+) is bound by residues K213 and H232. Residue D269 coordinates Mn(2+). ATP contacts are provided by residues E297, R333, 449–450, and T455; that span reads RI. R333 provides a ligand contact to substrate.

It belongs to the phosphoenolpyruvate carboxykinase (ATP) family. In terms of assembly, monomer. Requires Mn(2+) as cofactor.

The protein resides in the cytoplasm. It carries out the reaction oxaloacetate + ATP = phosphoenolpyruvate + ADP + CO2. The protein operates within carbohydrate biosynthesis; gluconeogenesis. In terms of biological role, involved in the gluconeogenesis. Catalyzes the conversion of oxaloacetate (OAA) to phosphoenolpyruvate (PEP) through direct phosphoryl transfer between the nucleoside triphosphate and OAA. The chain is Phosphoenolpyruvate carboxykinase (ATP) from Aliivibrio fischeri (strain MJ11) (Vibrio fischeri).